The following is a 217-amino-acid chain: Phosphatidylserine decarboxylase proenzyme (217 aa).

The Schiff-base intermediate with substrate; via pyruvic acid role is filled by S187. S187 carries the post-translational modification Pyruvic acid (Ser); by autocatalysis.

The protein belongs to the phosphatidylserine decarboxylase family. PSD-A subfamily. Heterodimer of a large membrane-associated beta subunit and a small pyruvoyl-containing alpha subunit. It depends on pyruvate as a cofactor. In terms of processing, is synthesized initially as an inactive proenzyme. Formation of the active enzyme involves a self-maturation process in which the active site pyruvoyl group is generated from an internal serine residue via an autocatalytic post-translational modification. Two non-identical subunits are generated from the proenzyme in this reaction, and the pyruvate is formed at the N-terminus of the alpha chain, which is derived from the carboxyl end of the proenzyme. The post-translation cleavage follows an unusual pathway, termed non-hydrolytic serinolysis, in which the side chain hydroxyl group of the serine supplies its oxygen atom to form the C-terminus of the beta chain, while the remainder of the serine residue undergoes an oxidative deamination to produce ammonia and the pyruvoyl prosthetic group on the alpha chain.

It is found in the cell membrane. It catalyses the reaction a 1,2-diacyl-sn-glycero-3-phospho-L-serine + H(+) = a 1,2-diacyl-sn-glycero-3-phosphoethanolamine + CO2. It functions in the pathway phospholipid metabolism; phosphatidylethanolamine biosynthesis; phosphatidylethanolamine from CDP-diacylglycerol: step 2/2. In terms of biological role, catalyzes the formation of phosphatidylethanolamine (PtdEtn) from phosphatidylserine (PtdSer). The sequence is that of Phosphatidylserine decarboxylase proenzyme from Thermobifida fusca (strain YX).